The following is a 566-amino-acid chain: Putative ABC transporter ATP-binding protein BC_2655 (566 aa).

ABC transporter domains follow at residues isoleucine 5–glutamate 246 and leucine 300–arginine 533. ATP-binding positions include glycine 39–serine 46 and glycine 333–serine 340.

This sequence belongs to the ABC transporter superfamily.

The protein localises to the cell membrane. Probably part of an ABC transporter complex. Responsible for energy coupling to the transport system. This Bacillus cereus (strain ATCC 14579 / DSM 31 / CCUG 7414 / JCM 2152 / NBRC 15305 / NCIMB 9373 / NCTC 2599 / NRRL B-3711) protein is Putative ABC transporter ATP-binding protein BC_2655.